Here is an 860-residue protein sequence, read N- to C-terminus: Linoleate 9S-lipoxygenase A (860 aa).

The PLAT domain maps to 29–159; the sequence is NALDFTDLAG…RYKSDRIFFA (131 aa). Residues 162–860 form the Lipoxygenase domain; it reads PYLPSETPEL…GKGIPNSVSI (699 aa). The tract at residues 209-246 is disordered; the sequence is PDQGKENVRTTLGGSADYPYPRRGRTGRPPTRTDPKSE. Fe cation contacts are provided by histidine 521, histidine 526, histidine 712, asparagine 716, and isoleucine 860.

Belongs to the lipoxygenase family. Monomer. It depends on Fe cation as a cofactor. In terms of tissue distribution, expressed in germinating seeds as well as in ripening fruit.

It localises to the cytoplasm. It carries out the reaction (9Z,12Z)-octadecadienoate + O2 = (9S)-hydroperoxy-(10E,12Z)-octadecadienoate. The protein operates within lipid metabolism; oxylipin biosynthesis. Its function is as follows. Plant lipoxygenase may be involved in a number of diverse aspects of plant physiology including growth and development, pest resistance, and senescence or responses to wounding. It catalyzes the hydroperoxidation of lipids containing a cis,cis-1,4-pentadiene structure. This chain is Linoleate 9S-lipoxygenase A (LOX1.1), found in Solanum lycopersicum (Tomato).